The following is a 1925-amino-acid chain: Methylcytosine dioxygenase tet3-A (1925 aa).

Residues 62 to 103 (SNKKRKRCGVCVPCLRKEPCGACYNCVNRSTSHQICKMRKCE) form a CXXC-type zinc finger. Residues cysteine 69, cysteine 72, cysteine 75, cysteine 81, cysteine 84, cysteine 87, cysteine 97, and cysteine 102 each contribute to the Zn(2+) site. Disordered stretches follow at residues 457-476 (KNAL…QNKK), 630-685 (KSQK…NAVF), 774-812 (GAKD…QNDL), and 833-892 (DFSL…PISH). A compositionally biased stretch (polar residues) spans 465 to 476 (SPRQTSWEQNKK). A compositionally biased stretch (basic residues) spans 665 to 677 (KPPRKQVQIKKPR). The span at 777–797 (DSCPTPSTDDASSSSGQGDSA) shows a compositional bias: low complexity. Composition is skewed to polar residues over residues 841-856 (APSQ…QISG) and 883-892 (PALSNNPISH). Residues cysteine 982, cysteine 984, cysteine 1042, histidine 1068, and cysteine 1070 each contribute to the Zn(2+) site. Arginine 1110 is a 2-oxoglutarate binding site. Positions 1120, 1122, 1138, 1147, and 1207 each coordinate Zn(2+). Cysteine 1223 contributes to the 2-oxoglutarate binding site. Histidine 1229 contributes to the Zn(2+) binding site. Fe cation is bound by residues histidine 1231 and aspartate 1233. Histidine 1265 is a binding site for 2-oxoglutarate. 4 disordered regions span residues 1307–1364 (SEPA…QTKP), 1474–1513 (LADG…KSFN), 1556–1600 (SVHS…LPND), and 1722–1769 (NWAS…EEEI). The span at 1316–1347 (RQLDAKKAAAEKKKLQKEKLVSPDKTKQEPAD) shows a compositional bias: basic and acidic residues. The segment covering 1350–1363 (MCQQNPGVPQQQTK) has biased composition (polar residues). Residues 1490–1499 (SYRRSSEVPH) show a composition bias toward basic and acidic residues. 3 stretches are compositionally biased toward polar residues: residues 1502–1513 (SLQNPNSQKSFN), 1556–1572 (SVHS…QTSD), and 1730–1742 (VGNS…SQNH). Histidine 1804 provides a ligand contact to Fe cation. 1819–1821 (RIS) contributes to the 2-oxoglutarate binding site. Positions 1837–1870 (LALWEAKMKLLAERARVKEEEAARLGIKQEVKSL) form a coiled coil.

Belongs to the TET family. Fe(2+) serves as cofactor. It depends on Zn(2+) as a cofactor. As to expression, detected in embryo (at protein level). Detected in embryonic head, in developing brain, neural tube and eye.

Its subcellular location is the nucleus. The protein resides in the chromosome. It carries out the reaction a 5-methyl-2'-deoxycytidine in DNA + 2-oxoglutarate + O2 = a 5-hydroxymethyl-2'-deoxycytidine in DNA + succinate + CO2. The catalysed reaction is a 5-hydroxymethyl-2'-deoxycytidine in DNA + 2-oxoglutarate + O2 = a 5-formyl-2'-deoxycytidine in DNA + succinate + CO2 + H2O. It catalyses the reaction a 5-formyl-2'-deoxycytidine in DNA + 2-oxoglutarate + O2 = a 5-carboxyl-2'-deoxycytidine in DNA + succinate + CO2 + H(+). Dioxygenase that catalyzes the conversion of the modified genomic base 5-methylcytosine (5mC) into 5-hydroxymethylcytosine (5hmC) and plays a key role in epigenetic chromatin reprogramming during embryonic development. Conversion of 5mC into 5hmC probably constitutes the first step in cytosine demethylation. Selectively binds to the promoter region of target genes and contributes to regulate the expression of numerous developmental genes, including pax6, rax, sox9 and six3. May also contribute to the regulation of target genes in ways that do not require its enzyme activity. In Xenopus laevis (African clawed frog), this protein is Methylcytosine dioxygenase tet3-A.